A 353-amino-acid chain; its full sequence is MGCGMSVEEKEGKARNEEIENQLKRDRMQQRNEIKMLLLGAGESGKSTILKQMKLIHEGGYSRDERESFKEIIYSNTVQSMRVILEAMESLELPLEDQRMEYHVQTIFMQPAQIEGEVLPPEVGNAIEALWKDRGVQECFKRSREYQLNDSARYYFDNIARIAAPDYMPDDQDVLRSRVKTTGITETTFIIGDLTYRMFDVGGQRSERKKWIHCFENVTTILFLVAISEYDQLLFEDETVNRMQEALTLFDSICNSRWFIKTSIILFLNKIDRFKEKLPISPMKNYFPDYEGGDDYAAACDYILNRFVNLNQHESKQIYTHFTCATDTTQIRFVMAAVNDIIIQENLRLCGLI.

A disordered region spans residues 1 to 26 (MGCGMSVEEKEGKARNEEIENQLKRD). Glycine 2 carries N-myristoyl glycine lipidation. Residue cysteine 3 is the site of S-palmitoyl cysteine attachment. A compositionally biased stretch (basic and acidic residues) spans 7-26 (VEEKEGKARNEEIENQLKRD). The G-alpha domain occupies 32–353 (NEIKMLLLGA…QENLRLCGLI (322 aa)). Positions 35 to 48 (KMLLLGAGESGKST) are G1 motif. Residues glutamate 43, serine 44, glycine 45, lysine 46, serine 47, threonine 48, aspartate 150, leucine 175, threonine 181, glycine 203, asparagine 269, lysine 270, aspartate 272, and alanine 325 each coordinate GTP. Residue serine 47 coordinates Mg(2+). A G2 motif region spans residues 173-181 (DVLRSRVKT). Threonine 181 contacts Mg(2+). The interval 196–205 (YRMFDVGGQR) is G3 motif. The G4 motif stretch occupies residues 265–272 (ILFLNKID). The G5 motif stretch occupies residues 323-328 (TCATDT).

Belongs to the G-alpha family. G(q) subfamily. As to quaternary structure, g proteins are composed of 3 units; alpha, beta and gamma. The alpha chain contains the guanine nucleotide binding site. It depends on Mg(2+) as a cofactor.

Functionally, guanine nucleotide-binding proteins (G proteins) are involved as modulators or transducers in various transmembrane signaling systems. This Sporothrix schenckii (strain ATCC 58251 / de Perez 2211183) (Rose-picker's disease fungus) protein is Guanine nucleotide-binding protein subunit alpha (SSG-1).